Here is a 217-residue protein sequence, read N- to C-terminus: Uridylate kinase (217 aa).

6–10 serves as a coordination point for ATP; that stretch reads KLSGR. G38 contacts UMP. ATP-binding residues include G39 and R43. Residues D60 and 107-113 each bind UMP; that span reads FQPGQST. ATP contacts are provided by N134, Y139, and D142.

The protein belongs to the UMP kinase family. Homohexamer.

Its subcellular location is the cytoplasm. The catalysed reaction is UMP + ATP = UDP + ADP. The protein operates within pyrimidine metabolism; CTP biosynthesis via de novo pathway; UDP from UMP (UMPK route): step 1/1. Its activity is regulated as follows. Inhibited by UTP. Functionally, catalyzes the reversible phosphorylation of UMP to UDP. This is Uridylate kinase from Pyrobaculum aerophilum (strain ATCC 51768 / DSM 7523 / JCM 9630 / CIP 104966 / NBRC 100827 / IM2).